Reading from the N-terminus, the 122-residue chain is Small ribosomal subunit protein uS13 (122 aa).

Residues 95-122 (GLPVRGQRTHTNARTRKGPAKPIAGKKK) are disordered.

It belongs to the universal ribosomal protein uS13 family. In terms of assembly, part of the 30S ribosomal subunit. Forms a loose heterodimer with protein S19. Forms two bridges to the 50S subunit in the 70S ribosome.

Its function is as follows. Located at the top of the head of the 30S subunit, it contacts several helices of the 16S rRNA. In the 70S ribosome it contacts the 23S rRNA (bridge B1a) and protein L5 of the 50S subunit (bridge B1b), connecting the 2 subunits; these bridges are implicated in subunit movement. Contacts the tRNAs in the A and P-sites. The protein is Small ribosomal subunit protein uS13 of Xanthobacter autotrophicus (strain ATCC BAA-1158 / Py2).